The sequence spans 965 residues: Calsyntenin-2 (965 aa).

Positions 1-20 (MLPGRLCLVPLLLALGVGSG) are cleaved as a signal peptide. Residues 21-835 (GGSGDGGDSR…SIQRSSVVPS (815 aa)) are Extracellular-facing. 2 Cadherin domains span residues 46–162 (IETS…APTF) and 163–282 (KEPA…MPLF). Asparagine 58 and asparagine 100 each carry an N-linked (GlcNAc...) asparagine glycan. Asparagine 344, asparagine 376, asparagine 720, and asparagine 733 each carry an N-linked (GlcNAc...) asparagine glycan. A helical transmembrane segment spans residues 836–856 (IATVVIIISVCMLVFVVAMGV). Residues 857–965 (YRVRIAHQHF…NTAGVINIWK (109 aa)) are Cytoplasmic-facing. Positions 891–965 (PMEKHEGPGH…NTAGVINIWK (75 aa)) are disordered. Residues 892 to 902 (MEKHEGPGHGE) show a composition bias toward basic and acidic residues. Positions 903 to 915 (DETEGEEEEEAEE) are enriched in acidic residues. Positions 942–959 (QSGTSSQRPERSTWNTAG) are enriched in polar residues.

This sequence belongs to the calsyntenin family. Proteolytically processed under normal cellular conditions. A primary zeta-cleavage generates a large extracellular (soluble) N-terminal domain (sAlc) and a short C-terminal transmembrane fragment (CTF1). A secondary cleavage catalyzed by gamma-secretase within the transmembrane domain releases the beta-Alc-gamma chain in the extracellular milieu and produces an intracellular fragment (AlcICD). This processing is strongly suppressed in the tripartite complex formed with APBA2 and APP, which seems to prevent the association with PSEN1.

It localises to the postsynaptic cell membrane. The protein localises to the endoplasmic reticulum membrane. Its subcellular location is the golgi apparatus membrane. The protein resides in the cell projection. It is found in the dendrite. Its function is as follows. Postsynaptic adhesion molecule that binds to presynaptic neurexins to mediate synapse formation, and which is involved in learning and memory. Promotes synapse development by acting as a cell adhesion molecule at the postsynaptic membrane, which associates with neurexin-alpha at the presynaptic membrane. The chain is Calsyntenin-2 from Rattus norvegicus (Rat).